The primary structure comprises 333 residues: Plasminogen (333 aa).

Residues 4–83 form the Kringle 5 domain; sequence CMFGNGKGYR…LFDYCDVPQC (80 aa). Cystine bridges form between Cys-4–Cys-83, Cys-25–Cys-66, Cys-54–Cys-78, Cys-90–Cys-208, Cys-100–Cys-108, Cys-130–Cys-146, Cys-222–Cys-289, Cys-252–Cys-268, and Cys-279–Cys-307. The region spanning 104–331 is the Peptidase S1 domain; that stretch reads VVGGCVANPH…FVTWIEGIMR (228 aa). Residue Ser-120 is modified to Phosphoserine. Active-site charge relay system residues include His-145 and Asp-188. Ser-283 functions as the Charge relay system in the catalytic mechanism.

It belongs to the peptidase S1 family. Plasminogen subfamily. Interacts with CSPG4 and AMOT. Interacts (via the Kringle domains) with HRG; the interaction tethers PLG to the cell surface and enhances its activation. Interacts (via Kringle 4 domain) with ADA; the interaction stimulates PLG activation when in complex with DPP4. Angiostatin: Interacts with ATP5F1A; the interaction inhibits most of the angiogenic effects of angiostatin.

The protein resides in the secreted. The enzyme catalyses Preferential cleavage: Lys-|-Xaa &gt; Arg-|-Xaa, higher selectivity than trypsin. Converts fibrin into soluble products.. Its activity is regulated as follows. Converted into plasmin by plasminogen activators, both plasminogen and its activator being bound to fibrin. Activated with urokinase and high concentrations of streptokinase. Plasmin dissolves the fibrin of blood clots and acts as a proteolytic factor in a variety of other processes including embryonic development, tissue remodeling, tumor invasion, and inflammation. In ovulation, weakens the walls of the Graafian follicle. It activates the urokinase-type plasminogen activator, collagenases and several complement zymogens, such as C1, C4 and C5. Cleavage of fibronectin and laminin leads to cell detachment and apoptosis. Also cleaves fibrin, thrombospondin and von Willebrand factor. Its role in tissue remodeling and tumor invasion may be modulated by CSPG4. Binds to cells. The polypeptide is Plasminogen (PLG) (Canis lupus familiaris (Dog)).